Here is a 188-residue protein sequence, read N- to C-terminus: Peptidyl-tRNA hydrolase (188 aa).

Residue Phe14 coordinates tRNA. The active-site Proton acceptor is His19. TRNA is bound by residues Tyr64, Asn66, and Asn112.

It belongs to the PTH family. Monomer.

It is found in the cytoplasm. The catalysed reaction is an N-acyl-L-alpha-aminoacyl-tRNA + H2O = an N-acyl-L-amino acid + a tRNA + H(+). Functionally, hydrolyzes ribosome-free peptidyl-tRNAs (with 1 or more amino acids incorporated), which drop off the ribosome during protein synthesis, or as a result of ribosome stalling. Catalyzes the release of premature peptidyl moieties from peptidyl-tRNA molecules trapped in stalled 50S ribosomal subunits, and thus maintains levels of free tRNAs and 50S ribosomes. In Aster yellows witches'-broom phytoplasma (strain AYWB), this protein is Peptidyl-tRNA hydrolase.